The following is a 182-amino-acid chain: uncharacterized protein (182 aa).

Disordered regions lie at residues 17-53 (AVSQ…QGSK) and 128-159 (DSLG…PKRS). Residues 42-53 (PQPQCPSAQGSK) show a composition bias toward polar residues. Positions 129–138 (SLGSSASSSS) are enriched in low complexity.

This is an uncharacterized protein from Homo sapiens (Human).